Consider the following 782-residue polypeptide: Phosphoribosylformylglycinamidine synthase subunit PurL (782 aa).

His48 is a catalytic residue. The ATP site is built by Tyr51 and Lys90. Residue Glu92 coordinates Mg(2+). Residues 93-96 (SHNH) and Arg115 contribute to the substrate site. Catalysis depends on His94, which acts as the Proton acceptor. Residue Asp116 participates in Mg(2+) binding. Gln239 serves as a coordination point for substrate. Residue Asp267 participates in Mg(2+) binding. 311–313 (ESQ) is a substrate binding site. 2 residues coordinate ATP: Asp525 and Gly562. Residue Asn563 participates in Mg(2+) binding. Ser565 is a binding site for substrate.

It belongs to the FGAMS family. In terms of assembly, monomer. Part of the FGAM synthase complex composed of 1 PurL, 1 PurQ and 2 PurS subunits.

It is found in the cytoplasm. The enzyme catalyses N(2)-formyl-N(1)-(5-phospho-beta-D-ribosyl)glycinamide + L-glutamine + ATP + H2O = 2-formamido-N(1)-(5-O-phospho-beta-D-ribosyl)acetamidine + L-glutamate + ADP + phosphate + H(+). The protein operates within purine metabolism; IMP biosynthesis via de novo pathway; 5-amino-1-(5-phospho-D-ribosyl)imidazole from N(2)-formyl-N(1)-(5-phospho-D-ribosyl)glycinamide: step 1/2. Part of the phosphoribosylformylglycinamidine synthase complex involved in the purines biosynthetic pathway. Catalyzes the ATP-dependent conversion of formylglycinamide ribonucleotide (FGAR) and glutamine to yield formylglycinamidine ribonucleotide (FGAM) and glutamate. The FGAM synthase complex is composed of three subunits. PurQ produces an ammonia molecule by converting glutamine to glutamate. PurL transfers the ammonia molecule to FGAR to form FGAM in an ATP-dependent manner. PurS interacts with PurQ and PurL and is thought to assist in the transfer of the ammonia molecule from PurQ to PurL. This chain is Phosphoribosylformylglycinamidine synthase subunit PurL, found in Nostoc sp. (strain PCC 7120 / SAG 25.82 / UTEX 2576).